A 516-amino-acid polypeptide reads, in one-letter code: Adenine DNA glycosylase (516 aa).

Over residues 1 to 23 (MKKLRASVRSHKKQPANHKRRGK) the composition is skewed to basic residues. The interval 1–38 (MKKLRASVRSHKKQPANHKRRGKCALSSSQAKPSGLDG) is disordered. Glu-105 functions as the Proton donor/acceptor in the catalytic mechanism. Residues Cys-261, Cys-268, Cys-271, and Cys-277 each contribute to the [4Fe-4S] cluster site. A Nudix hydrolase domain is found at 335–467 (PREEYSATCV…AMKKVFRVYE (133 aa)). A Nudix box motif is present at residues 376–398 (VTLEPSGQHQHKALLQELQHWSA). Residues 474–516 (CKGSKRPQVCTPSSRKKPSRGQQVLDRFFQRHIPTHKPNSTTQ) form a disordered region.

It belongs to the Nth/MutY family. [4Fe-4S] cluster is required as a cofactor. In terms of tissue distribution, expressed in brain, spleen, heart, liver and kidney.

The protein resides in the nucleus. It is found in the mitochondrion. The catalysed reaction is Hydrolyzes free adenine bases from 7,8-dihydro-8-oxoguanine:adenine mismatched double-stranded DNA, leaving an apurinic site.. In terms of biological role, involved in oxidative DNA damage repair. Initiates repair of A*oxoG to C*G by removing the inappropriately paired adenine base from the DNA backbone. Possesses both adenine and 2-OH-A DNA glycosylase activities. In Rattus norvegicus (Rat), this protein is Adenine DNA glycosylase (Mutyh).